Here is a 77-residue protein sequence, read N- to C-terminus: Conotoxin Ar5.1 b (77 aa).

A signal peptide spans 1 to 19; that stretch reads MLCLPVFIILLLLASPAAS. A propeptide spanning residues 20–44 is cleaved from the precursor; that stretch reads NPLKTRIQSDLIRAALEDADMKNEK.

The protein belongs to the conotoxin T superfamily. In terms of processing, contains 2 disulfide bonds that can be either 'C1-C3, C2-C4' or 'C1-C4, C2-C3', since these disulfide connectivities have been observed for conotoxins with cysteine framework V (for examples, see AC P0DQQ7 and AC P81755). In terms of tissue distribution, expressed by the venom duct.

The protein resides in the secreted. This Conus arenatus (Sand-dusted cone) protein is Conotoxin Ar5.1 b.